Here is a 456-residue protein sequence, read N- to C-terminus: MSLTNGVAPSLEKLAAEQKSRKKWLLVQPKSQTSMMVDSGAVSMPLNLIMVATLASKYFDVTFLDERTGDTIPQDFSGYDVVAITSRTLNAKNAYRIGDRAKAQGKIVLIGGVHPTMLTDEASLHCTSVIYGEIESVWEELAIDIFRGKMKSVYKASNLKPMTTMTPPDFSFALNSPHAKKYSQLIPILATKGCPVGCSFCTTPTVYGKSFRYREIDLVLDEMRAHQERLGKKKVRFSFMDDNISFRPKYFMELLEGMAKLGVRWNANISMNFLQKPEVAELAGRSGCELMSIGFESLNPDILKSMNKGSNRLQNYEAVVSNLHKHKIAIQGYFIFGFDDDSEKSFQATYDFIMQNRIEFPVFSLLTPFPGTPYFEEMKDRVRHFDWDKYDTYHYMFEPKKLGGEKLLENFIKLQREVYKGSAIMKRMQGKPLNWVWFVNFLMNRFTRKLTPEMYL.

Residues 178–405 (HAKKYSQLIP…MFEPKKLGGE (228 aa)) form the Radical SAM core domain. Positions 194, 198, and 201 each coordinate [4Fe-4S] cluster.

It belongs to the radical SAM superfamily. [4Fe-4S] cluster is required as a cofactor.

It localises to the cytoplasm. The enzyme catalyses 8-ethyl-12-methyl-3-vinylbacteriochlorophyllide d + S-adenosyl-L-methionine = 8,12-diethyl-3-vinylbacteriochlorophyllide d + S-adenosyl-L-homocysteine + H(+). It functions in the pathway porphyrin-containing compound metabolism; bacteriochlorophyll biosynthesis (light-independent). Its function is as follows. Involved in the biosynthesis of the major light-harvesting pigment bacteriochlorophyll c (BChlc), which confers a significant competitive advantage to green sulfur bacteria living at limiting red and near-infrared light intensities. BchR is a methyltransferase that adds a single methyl group to the methyl carbon at the C-12(1) position of 8-ethyl-12-methyl-3-vinylbacteriochlorophyllide d to yield 8,12-diethyl-3-vinylbacteriochlorophyllide d. The protein is Bacteriochlorophyllide d C-12(1)-methyltransferase of Chlorobaculum tepidum (strain ATCC 49652 / DSM 12025 / NBRC 103806 / TLS) (Chlorobium tepidum).